Here is a 378-residue protein sequence, read N- to C-terminus: Acetylornithine deacetylase (378 aa).

Residue histidine 76 coordinates Zn(2+). Aspartate 78 is a catalytic residue. Aspartate 108 is a Zn(2+) binding site. Glutamate 140 is a catalytic residue. Residues glutamate 141, glutamate 165, and histidine 351 each contribute to the Zn(2+) site.

It belongs to the peptidase M20A family. ArgE subfamily. As to quaternary structure, homodimer. Requires Zn(2+) as cofactor. Co(2+) is required as a cofactor. Glutathione serves as cofactor.

The protein resides in the cytoplasm. It catalyses the reaction N(2)-acetyl-L-ornithine + H2O = L-ornithine + acetate. Its pathway is amino-acid biosynthesis; L-arginine biosynthesis; L-ornithine from N(2)-acetyl-L-ornithine (linear): step 1/1. Its function is as follows. Catalyzes the hydrolysis of the amide bond of N(2)-acetylated L-amino acids. Cleaves the acetyl group from N-acetyl-L-ornithine to form L-ornithine, an intermediate in L-arginine biosynthesis pathway, and a branchpoint in the synthesis of polyamines. This chain is Acetylornithine deacetylase, found in Aliivibrio fischeri (strain ATCC 700601 / ES114) (Vibrio fischeri).